We begin with the raw amino-acid sequence, 223 residues long: Neurotrophic factor BDNF precursor form (223 aa).

A signal peptide spans 1-5; sequence SCMKA. A propeptide spanning residues 6–114 is cleaved from the precursor; it reads APMKEASIRG…AANMSMRVRR (109 aa). Asn107 carries an N-linked (GlcNAc...) asparagine glycan. 2 cysteine pairs are disulfide-bonded: Cys127-Cys194 and Cys172-Cys223.

This sequence belongs to the NGF-beta family.

The protein resides in the secreted. Functionally, promotes the survival of neuronal populations that are all located either in the central nervous system or directly connected to it. This Tropidophis haetianus (Haitian dwarf boa) protein is Neurotrophic factor BDNF precursor form (BDNF).